Consider the following 420-residue polypeptide: CinA-like protein (420 aa).

It belongs to the CinA family.

This chain is CinA-like protein, found in Chloroherpeton thalassium (strain ATCC 35110 / GB-78).